Here is a 469-residue protein sequence, read N- to C-terminus: 3-isopropylmalate dehydratase large subunit (469 aa).

Residues cysteine 350, cysteine 410, and cysteine 413 each contribute to the [4Fe-4S] cluster site.

This sequence belongs to the aconitase/IPM isomerase family. LeuC type 1 subfamily. In terms of assembly, heterodimer of LeuC and LeuD. [4Fe-4S] cluster serves as cofactor.

The catalysed reaction is (2R,3S)-3-isopropylmalate = (2S)-2-isopropylmalate. The protein operates within amino-acid biosynthesis; L-leucine biosynthesis; L-leucine from 3-methyl-2-oxobutanoate: step 2/4. Its function is as follows. Catalyzes the isomerization between 2-isopropylmalate and 3-isopropylmalate, via the formation of 2-isopropylmaleate. In Rhizobium etli (strain CIAT 652), this protein is 3-isopropylmalate dehydratase large subunit.